A 330-amino-acid polypeptide reads, in one-letter code: 4-hydroxythreonine-4-phosphate dehydrogenase (330 aa).

Residue threonine 133 coordinates substrate. A divalent metal cation contacts are provided by histidine 161, histidine 206, and histidine 261. Residues lysine 269, asparagine 278, and arginine 287 each contribute to the substrate site.

This sequence belongs to the PdxA family. In terms of assembly, homodimer. Zn(2+) serves as cofactor. Requires Mg(2+) as cofactor. It depends on Co(2+) as a cofactor.

The protein localises to the cytoplasm. The catalysed reaction is 4-(phosphooxy)-L-threonine + NAD(+) = 3-amino-2-oxopropyl phosphate + CO2 + NADH. Its pathway is cofactor biosynthesis; pyridoxine 5'-phosphate biosynthesis; pyridoxine 5'-phosphate from D-erythrose 4-phosphate: step 4/5. Catalyzes the NAD(P)-dependent oxidation of 4-(phosphooxy)-L-threonine (HTP) into 2-amino-3-oxo-4-(phosphooxy)butyric acid which spontaneously decarboxylates to form 3-amino-2-oxopropyl phosphate (AHAP). The chain is 4-hydroxythreonine-4-phosphate dehydrogenase from Xylella fastidiosa (strain Temecula1 / ATCC 700964).